The following is a 555-amino-acid chain: uncharacterized protein (555 aa).

A run of 5 helical transmembrane segments spans residues 13 to 30, 35 to 57, 72 to 91, 98 to 120, and 157 to 179; these read ALQAVVVLSLISAIGLGL, FWGVSLGVTFVFFAGILAGHFGL, LVIFVYSLGLQVGPGFFSSF, LNMLALAVVLLGTLLTVVASYAT, and TPALGCAVAYPMGVIGVILAVLL. RCK C-terminal domains are found at residues 188–273 and 282–366; these read EDLE…LFGE and KEDI…VLGN. Transmembrane regions (helical) follow at residues 376–398, 408–430, 437–459, 469–491, 498–517, and 532–554; these read LVVIFIGIVLGLALGAIPFSIPG, AGGPIIVGILLGTFGPRIHMITY, LMLRALGLSMYLACLGLDAGAHF, LLWIALGAGLTIIPTVLVGFVAF, FGSVSGMLCGSMANPMALNY, and ATVYPLCMFLRVIIAQVLLMFLL.

It belongs to the AAE transporter (TC 2.A.81) family.

Its subcellular location is the cell membrane. This is an uncharacterized protein from Bacteroides thetaiotaomicron (strain ATCC 29148 / DSM 2079 / JCM 5827 / CCUG 10774 / NCTC 10582 / VPI-5482 / E50).